Consider the following 218-residue polypeptide: NAD(P)H-quinone oxidoreductase subunit I (218 aa).

2 4Fe-4S ferredoxin-type domains span residues 55–84 (GRIH…VDWV) and 95–124 (RNYS…MTEE). Residues Cys64, Cys67, Cys70, Cys74, Cys104, Cys107, Cys110, and Cys114 each coordinate [4Fe-4S] cluster. The interval 168–218 (EVQPHGVDPSRPRAGQRPDQVLSSLKQNAGGSAGNEGESATSTNTSKGSAE) is disordered. A compositionally biased stretch (polar residues) spans 208–218 (TSTNTSKGSAE).

The protein belongs to the complex I 23 kDa subunit family. NDH-1 is composed of at least 11 different subunits. The cofactor is [4Fe-4S] cluster.

Its subcellular location is the cellular thylakoid membrane. It carries out the reaction a plastoquinone + NADH + (n+1) H(+)(in) = a plastoquinol + NAD(+) + n H(+)(out). The enzyme catalyses a plastoquinone + NADPH + (n+1) H(+)(in) = a plastoquinol + NADP(+) + n H(+)(out). NDH-1 shuttles electrons from an unknown electron donor, via FMN and iron-sulfur (Fe-S) centers, to quinones in the respiratory and/or the photosynthetic chain. The immediate electron acceptor for the enzyme in this species is believed to be plastoquinone. Couples the redox reaction to proton translocation, and thus conserves the redox energy in a proton gradient. This is NAD(P)H-quinone oxidoreductase subunit I from Synechococcus sp. (strain WH7803).